A 124-amino-acid polypeptide reads, in one-letter code: Small ribosomal subunit protein uS11 (124 aa).

It belongs to the universal ribosomal protein uS11 family. In terms of assembly, part of the 30S ribosomal subunit. Interacts with proteins S7 and S18. Binds to IF-3.

In terms of biological role, located on the platform of the 30S subunit, it bridges several disparate RNA helices of the 16S rRNA. Forms part of the Shine-Dalgarno cleft in the 70S ribosome. The polypeptide is Small ribosomal subunit protein uS11 (Anaplasma marginale (strain St. Maries)).